Reading from the N-terminus, the 172-residue chain is Putative phosphoesterase BCE_1348 (172 aa).

His34 serves as the catalytic Proton donor. Short sequence motifs (HXTX) lie at residues 34–37 and 115–118; these read HITL and HLTI. Residue His115 is the Proton acceptor of the active site.

This sequence belongs to the 2H phosphoesterase superfamily. YjcG family.

This chain is Putative phosphoesterase BCE_1348, found in Bacillus cereus (strain ATCC 10987 / NRS 248).